Consider the following 1025-residue polypeptide: Multidrug resistance protein MdtC (1025 aa).

12 helical membrane-spanning segments follow: residues 3–23, 333–353, 360–380, 387–407, 431–451, 463–483, 528–548, 853–873, 875–895, 897–917, 953–973, and 984–1004; these read FFAL…AITL, EVEQ…FLFL, IIPA…MYLC, LSLM…IVVL, VGFT…PLLL, FAVT…TLTP, LVGV…ISIP, VILI…LYES, VHPL…LLAL, LFNA…IGIV, PIMM…LSGG, and ITIV…TPVV.

This sequence belongs to the resistance-nodulation-cell division (RND) (TC 2.A.6) family. MdtC subfamily. Part of a tripartite efflux system composed of MdtA, MdtB and MdtC. MdtC forms a heteromultimer with MdtB.

The protein resides in the cell inner membrane. In Shigella boydii serotype 4 (strain Sb227), this protein is Multidrug resistance protein MdtC.